We begin with the raw amino-acid sequence, 502 residues long: NAD(P)H-quinone oxidoreductase chain 4, chloroplastic (502 aa).

A run of 14 helical transmembrane segments spans residues 4–24 (FPWL…IFFF), 37–57 (ICIC…HFQL), 87–107 (VGPI…AWPV), 113–130 (LFHF…GLFS), 134–154 (LLLF…LLSM), 167–187 (FILY…GMGL), 208–228 (ALEI…LPII), 242–262 (HYST…YGLV), 272–292 (AHSI…IYAA), 305–325 (IAYS…SITD), 330–350 (GAIL…FLAG), 374–396 (IFTM…GFAA), 416–436 (ILIT…SLSM), and 464–484 (LFVS…PDFV).

The protein belongs to the complex I subunit 4 family.

The protein localises to the plastid. Its subcellular location is the chloroplast thylakoid membrane. The enzyme catalyses a plastoquinone + NADH + (n+1) H(+)(in) = a plastoquinol + NAD(+) + n H(+)(out). The catalysed reaction is a plastoquinone + NADPH + (n+1) H(+)(in) = a plastoquinol + NADP(+) + n H(+)(out). This is NAD(P)H-quinone oxidoreductase chain 4, chloroplastic from Ranunculus macranthus (Large buttercup).